A 269-amino-acid polypeptide reads, in one-letter code: Proline-rich protein 7 (269 aa).

The Extracellular portion of the chain corresponds to 1 to 9; it reads MVMSQGTYT. The tract at residues 1-44 is required for interaction with NMDA receptors; it reads MVMSQGTYTFLTCFAGFWLIWGLIVLLCCFCSFLRRRLKRRQEE. The required for membrane localization stretch occupies residues 2–39; sequence VMSQGTYTFLTCFAGFWLIWGLIVLLCCFCSFLRRRLK. The helical; Signal-anchor for type III membrane protein transmembrane segment at 10–30 threads the bilayer; the sequence is FLTCFAGFWLIWGLIVLLCCF. The Cytoplasmic segment spans residues 31–269; sequence CSFLRRRLKR…IPLFGRTTAV (239 aa). Disordered stretches follow at residues 63 to 83 and 97 to 121; these read GSLA…RSRL and PLLH…PHPP. Ser-64 is modified (phosphoserine). Residues 108–117 are compositionally biased toward basic residues; sequence AHPHPHHHAL. The tract at residues 146–166 is required for internalization; that stretch reads PCYEEAVLMAEPPPPYSEVLT. Residues 146 to 269 are required for apoptosis induction; it reads PCYEEAVLMA…IPLFGRTTAV (124 aa). Residues 267 to 269 carry the PDZ-binding motif; the sequence is TAV.

Forms a complex with NMDA receptor zeta subunit GRIN1 and epsilon subunit GRIN2B. Interacts with GRIN2B. Interacts with GRIN1; the interaction is reduced upon NMDA receptor activity. Found in a postsynaptic membrane complex with DLG4 and GRIN1. Interacts with DLG4 (via PDZ3 domain and to lesser degree via PDZ2 domain). Interacts with JUN. Found in a complex with JUN and FBXW7. Interacts with JUN and FBXW7; the interaction inhibits ubiquitination-mediated JUN degradation promoting its phosphorylation and transcriptional activity. Interacts with SRC. Palmitoylated. Post-translationally, tyrosine phosphorylated, possibly by SRC. In terms of tissue distribution, highly expressed in brain, moderately expressed in lymph nodes and T cells and low expression in thymus and spleen. Expressed in single positive progenitor thymocytes, particularly in CD8 single positive thymocytes.

Its subcellular location is the cell membrane. The protein localises to the postsynaptic cell membrane. It localises to the postsynaptic density membrane. It is found in the cytoplasm. The protein resides in the perinuclear region. Its subcellular location is the synapse. The protein localises to the cell projection. It localises to the dendrite. It is found in the nucleus. Acts as a synapse-to-nucleus messenger to promote NMDA receptor-mediated excitotoxicity in neurons in a JUN-dependent manner. Inhibits ubiquitination-mediated degradation and promotes phosphorylation and transcriptional activity of transcription factor JUN. Might play a redundant role in the regulation of T cell receptor signaling. Might promote apoptosis in T cells. The sequence is that of Proline-rich protein 7 (Prr7) from Mus musculus (Mouse).